Consider the following 490-residue polypeptide: Histone-lysine N-methyltransferase, H3 lysine-9 specific (490 aa).

The Chromo domain occupies 8 to 69; the sequence is YEVERIVDEK…RKRRLKGSNS (62 aa). Disordered regions lie at residues 61–133 and 150–190; these read KRRL…TALT and KKLG…KPRN. Residues 102-114 are compositionally biased toward basic and acidic residues; that stretch reads FSRELNVKKENKK. Positions 115–133 are enriched in polar residues; sequence VFSSQTTKRQSRKQSTALT. An N6,N6,N6-trimethyllysine; alternate modification is found at lysine 127. Lysine 127 is modified (N6-methyllysine; alternate). The span at 155–168 shows a compositional bias: basic and acidic residues; sequence TRNEVKEESQKREL. Residues 169 to 185 show a composition bias toward polar residues; the sequence is VSNSIKEATSPKTSSIL. In terms of domain architecture, Pre-SET spans 258-325; it reads SGCNCSSLGG…ECPNRVVQRG (68 aa). Zn(2+)-binding residues include cysteine 260, cysteine 262, cysteine 268, cysteine 276, cysteine 278, cysteine 307, cysteine 311, cysteine 313, and cysteine 317. Residues 328–452 form the SET domain; sequence LPLEIFKTKE…PLEELTFDYA (125 aa). S-adenosyl-L-methionine-binding positions include 338-340, tyrosine 381, arginine 406, and 407-410; these read KGW and FFNH. Residue cysteine 412 coordinates Zn(2+). The interval 453-472 is autoregulatory loop; sequence GAKDFSPVQSQKSQQNRISK. Position 455 is an N6,N6,N6-trimethyllysine; by autocatalysis; alternate (lysine 455). An N6,N6-dimethyllysine; by autocatalysis; alternate modification is found at lysine 455. Position 455 is an N6-methyllysine; by autocatalysis; alternate (lysine 455). Position 464 is an N6-methyllysine (lysine 464). Positions 473-489 constitute a Post-SET domain; sequence LRRQCKCGSANCRGWLF. Zn(2+) contacts are provided by cysteine 477, cysteine 479, and cysteine 484. An S-adenosyl-L-methionine-binding site is contributed by 477–478; the sequence is CK.

It belongs to the class V-like SAM-binding methyltransferase superfamily. Histone-lysine methyltransferase family. Suvar3-9 subfamily. In terms of assembly, component of the Clr4 methyltransferase complex (ClrC) composed of at least clr4, rik1, pcu4, rbx1, raf1 and raf2. The cullin pcu4, rik1, raf1, raf2 and the ring-box protein rbx1 are components of an E3 ubiquitin ligase, whose activity is essential for heterochromatin assembly. Interacts directly with pcu4. Interacts with mlo3. Autocatalytic methylation of specific lysine residues in an internal loop (autoregulatory loop) promote a conformational switch that enhances the H3K9me activity of clr4.

It localises to the nucleus. The protein localises to the cytoplasm. It is found in the cytoskeleton. Its subcellular location is the microtubule organizing center. The protein resides in the spindle pole body. It localises to the chromosome. The enzyme catalyses L-lysyl(9)-[histone H3] + 3 S-adenosyl-L-methionine = N(6),N(6),N(6)-trimethyl-L-lysyl(9)-[histone H3] + 3 S-adenosyl-L-homocysteine + 3 H(+). It catalyses the reaction N(6)-methyl-L-lysyl(9)-[histone H3] + S-adenosyl-L-methionine = N(6),N(6)-dimethyl-L-lysyl(9)-[histone H3] + S-adenosyl-L-homocysteine + H(+). The catalysed reaction is N(6),N(6)-dimethyl-L-lysyl(9)-[histone H3] + S-adenosyl-L-methionine = N(6),N(6),N(6)-trimethyl-L-lysyl(9)-[histone H3] + S-adenosyl-L-homocysteine + H(+). It carries out the reaction L-lysyl-[protein] + S-adenosyl-L-methionine = N(6)-methyl-L-lysyl-[protein] + S-adenosyl-L-homocysteine + H(+). The enzyme catalyses N(6)-methyl-L-lysyl-[protein] + S-adenosyl-L-methionine = N(6),N(6)-dimethyl-L-lysyl-[protein] + S-adenosyl-L-homocysteine + H(+). It catalyses the reaction N(6),N(6)-dimethyl-L-lysyl-[protein] + S-adenosyl-L-methionine = N(6),N(6),N(6)-trimethyl-L-lysyl-[protein] + S-adenosyl-L-homocysteine + H(+). The catalysed reaction is L-lysyl(9)-[histone H3] + S-adenosyl-L-methionine = N(6)-methyl-L-lysyl(9)-[histone H3] + S-adenosyl-L-homocysteine + H(+). Its activity is regulated as follows. An internal loop (autoregulatory loop) inhibits the catalytic activity of the enzyme by blocking the histone H3K9 substrate-binding pocket. Autocatalytic methylation of specific lysine residues in this loop promote a conformational switch that enhances the H3K9me activity of clr4. Histone methyltransferase which contributes to the establishment of heterochromatin by specifically methylating histone H3 to form H3K9me. Part of the Clr4 methyltransferase complex (ClrC). ClrC preferentially ubiquitylates H3K14 and ClrC-mediated H3 ubiquitination promotes clr4 methyltransferase activity. Clr4 functions as a reader and writer of H3K9 methylation. It sets the H3K9me mark and afterwards this H3K9me mark is recognized by the chromodomains of clr4 and swi6/HP1, which then recruit additional clr4 leading to the methylation of neighboring nucleosomes. H3K9me represents a specific tag for epigenetic transcriptional repression by recruiting swi6/HP1 to methylated histones which leads to transcriptional silencing within centromeric heterochromatin, telomeres, ribosomal DNA repeats, and the silent mating-type region. Clr4 methyltransferase activity promotes the assembly of a tripartite complex composed of ClrC and complexes involved in siRNA generation. Apart from H3K9, also methylates non-histone proteins such as mlo3. Interacts with mlo3 to promote the processing of centromeric and antisense RNAs. The chain is Histone-lysine N-methyltransferase, H3 lysine-9 specific (clr4) from Schizosaccharomyces pombe (strain 972 / ATCC 24843) (Fission yeast).